A 305-amino-acid chain; its full sequence is 17-beta-hydroxysteroid dehydrogenase type 3 (305 aa).

Residue 44–73 (GQWAVITGAGDGIGKAYSFELARHGLNVVL) participates in NADP(+) binding. Serine 181 is a binding site for substrate. The Proton acceptor role is filled by tyrosine 194.

This sequence belongs to the short-chain dehydrogenases/reductases (SDR) family. 17-beta-HSD 3 subfamily. As to expression, expressed in the testes.

It is found in the endoplasmic reticulum. It carries out the reaction a 17beta-hydroxy steroid + NADP(+) = a 17-oxo steroid + NADPH + H(+). The enzyme catalyses testosterone + NADP(+) = androst-4-ene-3,17-dione + NADPH + H(+). The catalysed reaction is 17beta-estradiol + NADP(+) = estrone + NADPH + H(+). It catalyses the reaction 3beta-hydroxyandrost-5-en-17-one + NADPH + H(+) = androst-5-en-3beta,17beta-diol + NADP(+). It carries out the reaction 17beta-hydroxy-5alpha-androstan-3-one + NADP(+) = 5alpha-androstan-3,17-dione + NADPH + H(+). The enzyme catalyses androsterone + NADPH + H(+) = 5alpha-androstane-3alpha,17beta-diol + NADP(+). The catalysed reaction is 3beta-hydroxy-5alpha-androstan-17-one + NADPH + H(+) = 5alpha-androstane-3beta,17beta-diol + NADP(+). It catalyses the reaction androst-4-ene-3,11,17-trione + NADPH + H(+) = 17beta-hydroxyandrost-4-ene-3,11-dione + NADP(+). It carries out the reaction 11beta-hydroxyandrost-4-ene-3,17-dione + NADPH + H(+) = 11beta,17beta-dihydroxyandrost-4-ene-3-one + NADP(+). The protein operates within hormone biosynthesis; testosterone biosynthesis. It participates in steroid metabolism. Catalyzes the conversion of 17-oxosteroids to 17beta-hydroxysteroids. Favors the reduction of androstenedione to testosterone. Testosterone is the key androgen driving male development and function. Uses NADPH while the two other EDH17B enzymes use NADH. Androgens such as epiandrosterone, dehydroepiandrosterone, androsterone and androstanedione are accepted as substrates and reduced at C-17. Can reduce 11-ketoandrostenedione as well as 11beta-hydroxyandrostenedione at C-17 to the respective testosterone forms. Plays a role in the rate-limiting-step for the maximum level of testosterone production by the testis but does not affect basal testosterone production. This Mus musculus (Mouse) protein is 17-beta-hydroxysteroid dehydrogenase type 3.